A 430-amino-acid polypeptide reads, in one-letter code: Enolase (430 aa).

Gln165 is a binding site for (2R)-2-phosphoglycerate. Catalysis depends on Glu207, which acts as the Proton donor. Mg(2+) contacts are provided by Asp244, Glu287, and Asp314. Residues Lys339, Arg368, Ser369, and Lys390 each contribute to the (2R)-2-phosphoglycerate site. The active-site Proton acceptor is Lys339.

The protein belongs to the enolase family. As to quaternary structure, component of the RNA degradosome, a multiprotein complex involved in RNA processing and mRNA degradation. Mg(2+) is required as a cofactor.

Its subcellular location is the cytoplasm. It localises to the secreted. The protein resides in the cell surface. It catalyses the reaction (2R)-2-phosphoglycerate = phosphoenolpyruvate + H2O. The protein operates within carbohydrate degradation; glycolysis; pyruvate from D-glyceraldehyde 3-phosphate: step 4/5. Functionally, catalyzes the reversible conversion of 2-phosphoglycerate (2-PG) into phosphoenolpyruvate (PEP). It is essential for the degradation of carbohydrates via glycolysis. This is Enolase from Xanthomonas euvesicatoria pv. vesicatoria (strain 85-10) (Xanthomonas campestris pv. vesicatoria).